The primary structure comprises 120 residues: Methylglyoxal synthase (120 aa).

Residues 1–120 enclose the MGS-like domain; sequence MRIALIAHDN…TAEILVESVL (120 aa). Substrate-binding positions include histidine 8, lysine 12, and 54–55; that span reads SG. The Proton donor/acceptor role is filled by aspartate 60. A substrate-binding site is contributed by histidine 87.

The protein belongs to the methylglyoxal synthase family.

It carries out the reaction dihydroxyacetone phosphate = methylglyoxal + phosphate. In terms of biological role, catalyzes the formation of methylglyoxal from dihydroxyacetone phosphate. This is Methylglyoxal synthase from Natranaerobius thermophilus (strain ATCC BAA-1301 / DSM 18059 / JW/NM-WN-LF).